Consider the following 598-residue polypeptide: Aspartate--tRNA ligase (598 aa).

Glu182 contributes to the L-aspartate binding site. The interval 206 to 209 is aspartate; the sequence is QLFK. L-aspartate is bound at residue Arg228. ATP is bound by residues 228 to 230 and Gln237; that span reads RDE. His456 serves as a coordination point for L-aspartate. Glu490 is an ATP binding site. Arg497 contacts L-aspartate. Residue 542-545 coordinates ATP; sequence GVDR.

The protein belongs to the class-II aminoacyl-tRNA synthetase family. Type 1 subfamily. In terms of assembly, homodimer.

Its subcellular location is the cytoplasm. The enzyme catalyses tRNA(Asp) + L-aspartate + ATP = L-aspartyl-tRNA(Asp) + AMP + diphosphate. Its function is as follows. Catalyzes the attachment of L-aspartate to tRNA(Asp) in a two-step reaction: L-aspartate is first activated by ATP to form Asp-AMP and then transferred to the acceptor end of tRNA(Asp). The polypeptide is Aspartate--tRNA ligase (Agathobacter rectalis (strain ATCC 33656 / DSM 3377 / JCM 17463 / KCTC 5835 / VPI 0990) (Eubacterium rectale)).